A 280-amino-acid polypeptide reads, in one-letter code: Phosphatidylglycerol--prolipoprotein diacylglyceryl transferase (280 aa).

The next 4 membrane-spanning stretches (helical) occupy residues 12 to 32 (FGPF…LIGL), 52 to 72 (LLPL…VAFE), 86 to 106 (IWEG…TLIL), and 115 to 133 (FWDV…QSIG). Arg-134 is a binding site for a 1,2-diacyl-sn-glycero-3-phospho-(1'-sn-glycerol). 3 helical membrane-spanning segments follow: residues 173–193 (PTFL…ILLF), 203–223 (LPAG…RVWI), and 246–266 (IAQL…WWLY).

This sequence belongs to the Lgt family.

It localises to the cell inner membrane. It carries out the reaction L-cysteinyl-[prolipoprotein] + a 1,2-diacyl-sn-glycero-3-phospho-(1'-sn-glycerol) = an S-1,2-diacyl-sn-glyceryl-L-cysteinyl-[prolipoprotein] + sn-glycerol 1-phosphate + H(+). Its pathway is protein modification; lipoprotein biosynthesis (diacylglyceryl transfer). Catalyzes the transfer of the diacylglyceryl group from phosphatidylglycerol to the sulfhydryl group of the N-terminal cysteine of a prolipoprotein, the first step in the formation of mature lipoproteins. In Synechococcus sp. (strain CC9902), this protein is Phosphatidylglycerol--prolipoprotein diacylglyceryl transferase.